A 275-amino-acid polypeptide reads, in one-letter code: 2-dehydro-3-deoxyphosphooctonate aldolase (275 aa).

It belongs to the KdsA family.

It is found in the cytoplasm. The catalysed reaction is D-arabinose 5-phosphate + phosphoenolpyruvate + H2O = 3-deoxy-alpha-D-manno-2-octulosonate-8-phosphate + phosphate. Its pathway is carbohydrate biosynthesis; 3-deoxy-D-manno-octulosonate biosynthesis; 3-deoxy-D-manno-octulosonate from D-ribulose 5-phosphate: step 2/3. It functions in the pathway bacterial outer membrane biogenesis; lipopolysaccharide biosynthesis. This chain is 2-dehydro-3-deoxyphosphooctonate aldolase, found in Francisella philomiragia subsp. philomiragia (strain ATCC 25017 / CCUG 19701 / FSC 153 / O#319-036).